A 99-amino-acid chain; its full sequence is Nucleoid-associated protein LCABL_24440 (99 aa).

The protein belongs to the YbaB/EbfC family. Homodimer.

The protein resides in the cytoplasm. It localises to the nucleoid. Binds to DNA and alters its conformation. May be involved in regulation of gene expression, nucleoid organization and DNA protection. This Lacticaseibacillus casei (strain BL23) (Lactobacillus casei) protein is Nucleoid-associated protein LCABL_24440.